A 219-amino-acid polypeptide reads, in one-letter code: uncharacterized protein (219 aa).

A helical membrane pass occupies residues 13–32 (VFGLFLFSLIFFGLLSLATF).

It is found in the membrane. This is an uncharacterized protein from Aquifex aeolicus (strain VF5).